The chain runs to 384 residues: Alcohol dehydrogenase class-3 (384 aa).

Cys48, His70, Cys100, Cys103, Cys106, Cys114, and Cys177 together coordinate Zn(2+).

Belongs to the zinc-containing alcohol dehydrogenase family. Class-III subfamily. In terms of assembly, homodimer. Zn(2+) is required as a cofactor.

It localises to the cytoplasm. The catalysed reaction is a primary alcohol + NAD(+) = an aldehyde + NADH + H(+). It catalyses the reaction a secondary alcohol + NAD(+) = a ketone + NADH + H(+). It carries out the reaction S-(hydroxymethyl)glutathione + NADP(+) = S-formylglutathione + NADPH + H(+). The enzyme catalyses S-(hydroxymethyl)glutathione + NAD(+) = S-formylglutathione + NADH + H(+). In terms of biological role, class-III ADH is remarkably ineffective in oxidizing ethanol, but it readily catalyzes the oxidation of long-chain primary alcohols and the oxidation of S-(hydroxymethyl) glutathione. Plays a role in the calcium flux to the cytoplasm in the ASJ sensory neurons upon removal of a nitric oxide stimulus. This is Alcohol dehydrogenase class-3 from Caenorhabditis elegans.